The chain runs to 606 residues: Gastrula zinc finger protein XlCGF66.1 (606 aa).

Disordered stretches follow at residues 1-31 (MGMW…RGKK) and 240-271 (TLHS…KRQK). A compositionally biased stretch (basic and acidic residues) spans 242-262 (HSKDSCNEGHKHLSHKSDYNK). 11 C2H2-type zinc fingers span residues 273 to 295 (FSCS…QKTH), 300 to 322 (LLCL…RQTH), 328 to 350 (FSCS…QITH), 384 to 407 (DFCS…QQVH), 413 to 435 (FSCT…QRTH), 441 to 464 (YSCS…QQVH), 470 to 492 (FFCS…QRTH), 498 to 521 (YSCS…QQVH), 527 to 549 (FSCS…QRTH), 555 to 578 (DFCF…QQVH), and 584 to 606 (FSCS…HRTH).

This sequence belongs to the krueppel C2H2-type zinc-finger protein family.

It is found in the nucleus. May be involved in transcriptional regulation. In Xenopus laevis (African clawed frog), this protein is Gastrula zinc finger protein XlCGF66.1.